The primary structure comprises 160 residues: Major strawberry allergen Fra a 1.05 (160 aa).

Belongs to the BetVI family. Post-translationally, phosphorylated in vivo. Phosphorylation prevents its activity as ribonuclease.

In terms of biological role, possesses ribonuclease activity in vitro. This is Major strawberry allergen Fra a 1.05 from Fragaria ananassa (Strawberry).